Reading from the N-terminus, the 404-residue chain is Glucose-1-phosphate adenylyltransferase (404 aa).

Alpha-D-glucose 1-phosphate-binding positions include tyrosine 99, glycine 164, 179–180, and serine 197; that span reads EK.

This sequence belongs to the bacterial/plant glucose-1-phosphate adenylyltransferase family. Homotetramer.

It catalyses the reaction alpha-D-glucose 1-phosphate + ATP + H(+) = ADP-alpha-D-glucose + diphosphate. It participates in glycan biosynthesis; glycogen biosynthesis. Its function is as follows. Involved in the biosynthesis of ADP-glucose, a building block required for the elongation reactions to produce glycogen. Catalyzes the reaction between ATP and alpha-D-glucose 1-phosphate (G1P) to produce pyrophosphate and ADP-Glc. The chain is Glucose-1-phosphate adenylyltransferase from Rhodococcus opacus (strain B4).